The primary structure comprises 183 residues: Phosphinothricin N-acetyltransferase (183 aa).

An N-acetyltransferase domain is found at 8-169 (VEIRPATAAD…DVGFWQRDFE (162 aa)). Residues 91–93 (VYV), 99–104 (RLGLGS), and Asn130 contribute to the acetyl-CoA site.

This sequence belongs to the acetyltransferase family. PAT/BAR subfamily.

The enzyme catalyses phosphinothricin + acetyl-CoA = N-acetylphosphinothricin + CoA + H(+). Inactivates phosphinothricin (PPT) by transfer of an acetyl group from acetyl CoA. This enzyme is an effector of phosphinothricin tripeptide (PTT or bialaphos) resistance. In Streptomyces viridochromogenes (strain DSM 40736 / JCM 4977 / BCRC 1201 / Tue 494), this protein is Phosphinothricin N-acetyltransferase.